The following is a 77-amino-acid chain: Large ribosomal subunit protein bL28 (77 aa).

This sequence belongs to the bacterial ribosomal protein bL28 family.

The sequence is that of Large ribosomal subunit protein bL28 from Dechloromonas aromatica (strain RCB).